The chain runs to 278 residues: MNNILSEEVLNVTDFTTSRQLTLWKREDLQSSQLDDVAEEVPVALVYNGISHVVMMASPKDLTHFAMGFSLSEGIIDSPREIYGMDVVPSCNGLEVQIDLSSRRFMGLKARRRALAGRTGCGVCGVEQLNDIGKPVQPLPFSQTFNLGNLDRALKHLNDFQPTGKLTGCTHAAAWVMPSGELAGGHEDVGRHVALDKLLGRRATEGEEWRQGAALVSSRASYEMVQKSAMCGVEILFAVSAATTLAVDVAERCNLTLVGFCKPGRATIYTHPQRLIAD.

Cys121 functions as the Cysteine persulfide intermediate in the catalytic mechanism. 260–265 (FCKPGR) provides a ligand contact to Mo-bis(molybdopterin guanine dinucleotide).

This sequence belongs to the FdhD family.

It localises to the cytoplasm. In terms of biological role, required for formate dehydrogenase (FDH) activity. Acts as a sulfur carrier protein that transfers sulfur from IscS to the molybdenum cofactor prior to its insertion into FDH. This is Sulfur carrier protein FdhD from Salmonella typhi.